A 254-amino-acid chain; its full sequence is MVRPKKKPVLGKDGKPLSAAAAKLRLLKRLKCTTKYEKLAADSGAKLIAGIDEVGRGALFGPVVAAAVILDPNYRIKGLRDSKLLPAETREILSKRIREHCIAWSIAAVDVARIDQLNIYWASNLAMKHAVRGLSCQPDHLLIDAMKLDLDCAQTPIIHGDALSASIAAASIIAKVHRDALIREWAPIFPEYDLASNKGYSAPKHIKALREFGPSPLHRQSFAPVWMASAPQEVLEFMLEETADTAVPPEVLED.

In terms of domain architecture, RNase H type-2 spans 46–234 (KLIAGIDEVG…VWMASAPQEV (189 aa)). 3 residues coordinate a divalent metal cation: Asp-52, Glu-53, and Asp-144.

This sequence belongs to the RNase HII family. Requires Mn(2+) as cofactor. The cofactor is Mg(2+).

It localises to the cytoplasm. The enzyme catalyses Endonucleolytic cleavage to 5'-phosphomonoester.. In terms of biological role, endonuclease that specifically degrades the RNA of RNA-DNA hybrids. This Koribacter versatilis (strain Ellin345) protein is Ribonuclease HII.